The sequence spans 1462 residues: Protein peg1 (1462 aa).

2 disordered regions span residues 528–563 (SFSK…SRER) and 573–592 (FHST…SIAI). 2 stretches are compositionally biased toward low complexity: residues 538 to 552 (SSNS…RLGL) and 574 to 589 (HSTS…HSPS). Phosphoserine is present on serine 599. Positions 838 to 928 (SSTHQEHLSK…NCSEESLDDH (91 aa)) are disordered. A compositionally biased stretch (low complexity) spans 847-866 (KNLPTLNTSSSSNSSQTDLL). Residues 870–896 (GKGETKETEMQSPIESKEGLLSKDTHI) show a composition bias toward basic and acidic residues. Residue serine 1221 is modified to Phosphoserine. Positions 1342-1367 (TLIAEIADLQGLYEFTQQRLQSLNTE) form a coiled coil.

Belongs to the CLASP family. As to quaternary structure, interacts with microtubules. Interacts with dhc1, mal3 and tea1.

Its subcellular location is the cytoplasm. The protein resides in the cytoskeleton. The protein localises to the spindle. It localises to the microtubule organizing center. It is found in the spindle pole body. In terms of biological role, microtubule binding protein that regulates the stability of dynamic microtubules. Required for mitotic spindle formation. This chain is Protein peg1 (peg1), found in Schizosaccharomyces pombe (strain 972 / ATCC 24843) (Fission yeast).